We begin with the raw amino-acid sequence, 360 residues long: Phospho-N-acetylmuramoyl-pentapeptide-transferase (360 aa).

Transmembrane regions (helical) follow at residues 21 to 41, 73 to 93, 94 to 114, 132 to 152, 168 to 188, 199 to 219, 239 to 259, 263 to 283, 288 to 308, and 338 to 358; these read YITV…LWIG, TMGG…WANL, ANSY…IGFV, WKYF…YWLG, IMPQ…VGTG, GLAI…AWAT, VVVF…FNTY, VFMG…VAIL, FLLV…ILQV, and VIIR…VTLK.

This sequence belongs to the glycosyltransferase 4 family. MraY subfamily. It depends on Mg(2+) as a cofactor.

It is found in the cell inner membrane. The catalysed reaction is UDP-N-acetyl-alpha-D-muramoyl-L-alanyl-gamma-D-glutamyl-meso-2,6-diaminopimeloyl-D-alanyl-D-alanine + di-trans,octa-cis-undecaprenyl phosphate = di-trans,octa-cis-undecaprenyl diphospho-N-acetyl-alpha-D-muramoyl-L-alanyl-D-glutamyl-meso-2,6-diaminopimeloyl-D-alanyl-D-alanine + UMP. It participates in cell wall biogenesis; peptidoglycan biosynthesis. Catalyzes the initial step of the lipid cycle reactions in the biosynthesis of the cell wall peptidoglycan: transfers peptidoglycan precursor phospho-MurNAc-pentapeptide from UDP-MurNAc-pentapeptide onto the lipid carrier undecaprenyl phosphate, yielding undecaprenyl-pyrophosphoryl-MurNAc-pentapeptide, known as lipid I. The polypeptide is Phospho-N-acetylmuramoyl-pentapeptide-transferase (Haemophilus influenzae (strain 86-028NP)).